The chain runs to 510 residues: NAD(P)H-quinone oxidoreductase subunit 2, chloroplastic (510 aa).

12 helical membrane-spanning segments follow: residues 24–44, 59–79, 99–119, 124–144, 149–169, 184–204, 229–249, 295–315, 323–343, 347–367, 395–415, and 418–438; these read LLLF…GLIL, WFYF…LFRW, IFQF…VEYI, MAIT…MFLC, LITI…LSGY, LLMG…LYGL, ISIA…PAPF, WHLL…LIAI, MLAY…IVGD, GYAS…GTFA, ALSL…AGFF, and LHLF…IGLL.

This sequence belongs to the complex I subunit 2 family. As to quaternary structure, NDH is composed of at least 16 different subunits, 5 of which are encoded in the nucleus.

Its subcellular location is the plastid. It localises to the chloroplast thylakoid membrane. It catalyses the reaction a plastoquinone + NADH + (n+1) H(+)(in) = a plastoquinol + NAD(+) + n H(+)(out). The enzyme catalyses a plastoquinone + NADPH + (n+1) H(+)(in) = a plastoquinol + NADP(+) + n H(+)(out). Functionally, NDH shuttles electrons from NAD(P)H:plastoquinone, via FMN and iron-sulfur (Fe-S) centers, to quinones in the photosynthetic chain and possibly in a chloroplast respiratory chain. The immediate electron acceptor for the enzyme in this species is believed to be plastoquinone. Couples the redox reaction to proton translocation, and thus conserves the redox energy in a proton gradient. The sequence is that of NAD(P)H-quinone oxidoreductase subunit 2, chloroplastic from Muilla maritima (Sea muilla).